The following is a 2094-amino-acid chain: Protein Ycf2 (2094 aa).

1385-1392 (GPPETGRS) contributes to the ATP binding site.

Belongs to the Ycf2 family.

The protein localises to the plastid. The protein resides in the chloroplast stroma. In terms of biological role, probable ATPase of unknown function. Its presence in a non-photosynthetic plant (Epifagus virginiana) and experiments in tobacco indicate that it has an essential function which is probably not related to photosynthesis. The chain is Protein Ycf2 from Huperzia lucidula (Shining clubmoss).